Reading from the N-terminus, the 191-residue chain is dTTP/UTP pyrophosphatase (191 aa).

Aspartate 65 functions as the Proton acceptor in the catalytic mechanism.

The protein belongs to the Maf family. YhdE subfamily. The cofactor is a divalent metal cation.

Its subcellular location is the cytoplasm. The enzyme catalyses dTTP + H2O = dTMP + diphosphate + H(+). It catalyses the reaction UTP + H2O = UMP + diphosphate + H(+). Its function is as follows. Nucleoside triphosphate pyrophosphatase that hydrolyzes dTTP and UTP. May have a dual role in cell division arrest and in preventing the incorporation of modified nucleotides into cellular nucleic acids. The protein is dTTP/UTP pyrophosphatase of Leptospira biflexa serovar Patoc (strain Patoc 1 / Ames).